Consider the following 268-residue polypeptide: Tetraspanin-33 (268 aa).

The Cytoplasmic segment spans residues 1 to 23 (MVRKSPGSGKEEDFTFISPVVKY). A helical membrane pass occupies residues 24–44 (LLIFFNMLFWVISMVMVGIGV). The Extracellular segment spans residues 45-63 (YARLLKHAEAAMACLAVDP). Residues 64-84 (ALLLIGVGILMFLITFCGCIG) traverse the membrane as a helical segment. Topologically, residues 85 to 95 (SLRENICLLQT) are cytoplasmic. Residues 96-116 (FSICLTLVFLLQLAVGIVGFI) form a helical membrane-spanning segment. Topologically, residues 117-226 (FSDKARGKVS…FIHTNGCIDR (110 aa)) are extracellular. Intrachain disulfides connect Cys-155–Cys-223, Cys-156–Cys-188, Cys-172–Cys-182, and Cys-189–Cys-202. N-linked (GlcNAc...) asparagine glycans are attached at residues Asn-171 and Asn-176. A helical transmembrane segment spans residues 227–247 (LVNWIHSNLFLLGGVALGLAI). At 248–268 (PQVTKHLRAKLIYTWRIGIQV) the chain is on the cytoplasmic side.

The protein belongs to the tetraspanin (TM4SF) family. As to quaternary structure, homodimer; disulfide-linked.

The protein localises to the cell membrane. Its subcellular location is the cell junction. It is found in the adherens junction. It localises to the cytoplasm. In terms of biological role, part of TspanC8 subgroup, composed of 6 members that interact with the transmembrane metalloprotease ADAM10. This interaction is required for ADAM10 exit from the endoplasmic reticulum and for enzymatic maturation and trafficking to the cell surface as well as substrate specificity. Different TspanC8/ADAM10 complexes have distinct substrates. This chain is Tetraspanin-33 (tspan33), found in Xenopus laevis (African clawed frog).